Reading from the N-terminus, the 332-residue chain is Biotin synthase (332 aa).

A Radical SAM core domain is found at 53–282; it reads YFGKKVKLNM…SKEIRISGGR (230 aa). [4Fe-4S] cluster contacts are provided by Cys-71, Cys-75, and Cys-78. [2Fe-2S] cluster-binding residues include Cys-115, Cys-147, Cys-207, and Arg-277.

It belongs to the radical SAM superfamily. Biotin synthase family. Homodimer. The cofactor is [4Fe-4S] cluster. Requires [2Fe-2S] cluster as cofactor.

It catalyses the reaction (4R,5S)-dethiobiotin + (sulfur carrier)-SH + 2 reduced [2Fe-2S]-[ferredoxin] + 2 S-adenosyl-L-methionine = (sulfur carrier)-H + biotin + 2 5'-deoxyadenosine + 2 L-methionine + 2 oxidized [2Fe-2S]-[ferredoxin]. It participates in cofactor biosynthesis; biotin biosynthesis; biotin from 7,8-diaminononanoate: step 2/2. Catalyzes the conversion of dethiobiotin (DTB) to biotin by the insertion of a sulfur atom into dethiobiotin via a radical-based mechanism. The sequence is that of Biotin synthase from Bacillus cytotoxicus (strain DSM 22905 / CIP 110041 / 391-98 / NVH 391-98).